Consider the following 599-residue polypeptide: Elongation factor 4 (599 aa).

Positions 4–186 constitute a tr-type G domain; it reads EHIRNFSIIA…EIVKKIPPPK (183 aa). Residues 16–21 and 133–136 each bind GTP; these read DHGKST and NKID.

This sequence belongs to the TRAFAC class translation factor GTPase superfamily. Classic translation factor GTPase family. LepA subfamily.

The protein resides in the cell inner membrane. The catalysed reaction is GTP + H2O = GDP + phosphate + H(+). Required for accurate and efficient protein synthesis under certain stress conditions. May act as a fidelity factor of the translation reaction, by catalyzing a one-codon backward translocation of tRNAs on improperly translocated ribosomes. Back-translocation proceeds from a post-translocation (POST) complex to a pre-translocation (PRE) complex, thus giving elongation factor G a second chance to translocate the tRNAs correctly. Binds to ribosomes in a GTP-dependent manner. This is Elongation factor 4 from Citrifermentans bemidjiense (strain ATCC BAA-1014 / DSM 16622 / JCM 12645 / Bem) (Geobacter bemidjiensis).